We begin with the raw amino-acid sequence, 754 residues long: Neprilysin-1 (754 aa).

Residues 5 to 27 traverse the membrane as a helical; Signal-anchor for type II membrane protein segment; sequence FGPPIVFLISCYALILCGTVDAL. N-linked (GlcNAc...) asparagine glycosylation is found at asparagine 38, asparagine 81, asparagine 132, asparagine 217, asparagine 273, asparagine 303, and asparagine 441. In terms of domain architecture, Peptidase M13 spans 63 to 754; it reads VGDSEGYQEA…MNPTKRCVVW (692 aa). 4 disulfide bridges follow: cysteine 87-cysteine 739, cysteine 95-cysteine 699, cysteine 151-cysteine 414, and cysteine 624-cysteine 751. Residue histidine 587 participates in Zn(2+) binding. Residue glutamate 588 is part of the active site. Position 591 (histidine 591) interacts with Zn(2+). Asparagine 612 carries N-linked (GlcNAc...) asparagine glycosylation. Residue glutamate 649 participates in Zn(2+) binding. Residue aspartate 653 is the Proton donor of the active site.

The protein belongs to the peptidase M13 family. Requires Zn(2+) as cofactor. In terms of tissue distribution, specifically expressed in pharyngeal cells and a single head neuron.

The protein localises to the membrane. Its function is as follows. Probable cell surface protease. Required to control the neuronal innervation of pharyngeal pumping. This chain is Neprilysin-1 (nep-1), found in Caenorhabditis elegans.